The sequence spans 117 residues: MDLIKIAEEAFATGKQHPSFKAGDTITVAYRIVEGSKERVQLYRGVVIKIAGHGDKKRFTVRKMSGTVGVERIFPIESPAIDSITVNKVGKVRRAKLYYLRALTGKKARIQEKRVNQ.

It belongs to the bacterial ribosomal protein bL19 family.

Functionally, this protein is located at the 30S-50S ribosomal subunit interface and may play a role in the structure and function of the aminoacyl-tRNA binding site. The sequence is that of Large ribosomal subunit protein bL19 from Phocaeicola vulgatus (strain ATCC 8482 / DSM 1447 / JCM 5826 / CCUG 4940 / NBRC 14291 / NCTC 11154) (Bacteroides vulgatus).